Here is a 207-residue protein sequence, read N- to C-terminus: Neuroendocrine protein 7B2 (207 aa).

A signal peptide spans 1-22; sequence MVSTMLSGLVLWLTFGWTPALA. Cysteines 116 and 125 form a disulfide. Phosphoserine occurs at positions 136 and 200. A disordered region spans residues 168–207; sequence KGGQRRKRRSVNPYLQGQRLDNVVAKKSVPHFSDEDKDPE.

It belongs to the 7B2 family. As to quaternary structure, interacts with PCSK2/PC2 early in the secretory pathway. Dissociation occurs at later stages. Proteolytically cleaved in the Golgi by a furin-like convertase to generate bioactive peptides. In terms of processing, sulfated on tyrosine residues.

The protein localises to the secreted. In terms of biological role, acts as a molecular chaperone for PCSK2/PC2, preventing its premature activation in the regulated secretory pathway. Binds to inactive PCSK2 in the endoplasmic reticulum and facilitates its transport from there to later compartments of the secretory pathway where it is proteolytically matured and activated. Also required for cleavage of PCSK2 but does not appear to be involved in its folding. Plays a role in regulating pituitary hormone secretion. The C-terminal peptide inhibits PCSK2 in vitro. This is Neuroendocrine protein 7B2 (SCG5) from Sus scrofa (Pig).